The primary structure comprises 405 residues: Metallophosphoesterase 1 (405 aa).

The chain crosses the membrane as a helical span at residues 31–51 (IFGSILLVFFFCEFLVYYLVI). 6 residues coordinate a divalent metal cation: aspartate 78, aspartate 120, asparagine 158, histidine 261, histidine 315, and histidine 317. A helical transmembrane segment spans residues 369–389 (IIYIYCTASVLLTGYVLACLW).

The protein belongs to the metallophosphoesterase superfamily. MPPE1 family. The cofactor is Mn(2+).

The protein localises to the endoplasmic reticulum-Golgi intermediate compartment membrane. In terms of biological role, metallophosphoesterase that catalyzes the removal of a side-chain ethanolamine-phosphate (EtNP) from the second mannose of the GPI-anchor protein intermediate. Participates in the glycan remodeling steps of GPI-anchor maturation to allow an efficient transport of GPI-anchor proteins from the endoplasmic reticulum to the Golgi. This chain is Metallophosphoesterase 1, found in Xenopus laevis (African clawed frog).